We begin with the raw amino-acid sequence, 762 residues long: Serine/threonine-protein kinase PLK4 (762 aa).

The 255-residue stretch at 14–268 (YEVQHLLGKG…LEQVLRHPFM (255 aa)) folds into the Protein kinase domain. Residues 20–28 (LGKGGFACV) and Lys43 contribute to the ATP site. Asp139 serves as the catalytic Proton acceptor. Residues 383-498 (AECISMPPLN…ARFVSLVKSK (116 aa)) form the Cryptic POLO box 1 (CPB1) domain. The 104-residue stretch at 499–602 (TPKVTYFSGL…GRRPTPEVMP (104 aa)) folds into the Cryptic POLO box 2 (CPB2) domain. In terms of domain architecture, POLO box spans 657 to 736 (PIKRLNVPGV…LPQVQMKLKS (80 aa)).

Belongs to the protein kinase superfamily. Ser/Thr protein kinase family. CDC5/Polo subfamily. As to quaternary structure, homodimer. Ubiquitinated by the SCF(Slimb) ubiquitin ligase complex; leading to its degradation by the proteasome during interphase and regulating centriole number and ensuring the block to centriole reduplication.

The protein resides in the cytoplasm. Its subcellular location is the cytoskeleton. It localises to the microtubule organizing center. The protein localises to the centrosome. It is found in the centriole. The catalysed reaction is L-seryl-[protein] + ATP = O-phospho-L-seryl-[protein] + ADP + H(+). It catalyses the reaction L-threonyl-[protein] + ATP = O-phospho-L-threonyl-[protein] + ADP + H(+). Functionally, serine/threonine-protein kinase that plays a central role in centriole duplication. Able to trigger procentriole formation on the surface of the mother centriole cylinder, using mother centriole as a platform, leading to the recruitment of centriole biogenesis proteins such as sas-6. When overexpressed, it is able to induce centrosome amplification through the simultaneous generation of multiple procentrioles adjoining each parental centriole during S phase. Centrosome amplification following overexpression can initiate tumorigenesis, highlighting the importance of centrosome regulation in cancers. This chain is Serine/threonine-protein kinase PLK4 (SAK), found in Drosophila grimshawi (Hawaiian fruit fly).